The primary structure comprises 484 residues: NADH-quinone oxidoreductase subunit N (484 aa).

The next 14 helical transmembrane spans lie at 11–31 (SLWI…VLLI), 42–62 (VTYY…FNLI), 79–98 (MASV…MVYS), 113–133 (FVLV…YSLL), 134–154 (TLYL…AIAR), 167–187 (FVLG…IYGI), 211–231 (LIIN…LGAV), 248–268 (VTLF…VRIL), 279–299 (WSDL…VVAL), 313–333 (ISHV…GYGA), 335–355 (AFYM…IILL), 378–398 (FALM…LVGF), 408–428 (VVSA…VISA), and 457–477 (LVLS…DFWM).

It belongs to the complex I subunit 2 family. As to quaternary structure, NDH-1 is composed of 14 different subunits. Subunits NuoA, H, J, K, L, M, N constitute the membrane sector of the complex.

The protein localises to the cell inner membrane. It carries out the reaction a quinone + NADH + 5 H(+)(in) = a quinol + NAD(+) + 4 H(+)(out). Functionally, NDH-1 shuttles electrons from NADH, via FMN and iron-sulfur (Fe-S) centers, to quinones in the respiratory chain. The immediate electron acceptor for the enzyme in this species is believed to be ubiquinone. Couples the redox reaction to proton translocation (for every two electrons transferred, four hydrogen ions are translocated across the cytoplasmic membrane), and thus conserves the redox energy in a proton gradient. In Ruthia magnifica subsp. Calyptogena magnifica, this protein is NADH-quinone oxidoreductase subunit N.